Consider the following 509-residue polypeptide: Aspartyl/glutamyl-tRNA(Asn/Gln) amidotransferase subunit B (509 aa).

The protein belongs to the GatB/GatE family. GatB subfamily. In terms of assembly, heterotrimer of A, B and C subunits.

It catalyses the reaction L-glutamyl-tRNA(Gln) + L-glutamine + ATP + H2O = L-glutaminyl-tRNA(Gln) + L-glutamate + ADP + phosphate + H(+). The enzyme catalyses L-aspartyl-tRNA(Asn) + L-glutamine + ATP + H2O = L-asparaginyl-tRNA(Asn) + L-glutamate + ADP + phosphate + 2 H(+). In terms of biological role, allows the formation of correctly charged Asn-tRNA(Asn) or Gln-tRNA(Gln) through the transamidation of misacylated Asp-tRNA(Asn) or Glu-tRNA(Gln) in organisms which lack either or both of asparaginyl-tRNA or glutaminyl-tRNA synthetases. The reaction takes place in the presence of glutamine and ATP through an activated phospho-Asp-tRNA(Asn) or phospho-Glu-tRNA(Gln). The chain is Aspartyl/glutamyl-tRNA(Asn/Gln) amidotransferase subunit B from Psychrobacter cryohalolentis (strain ATCC BAA-1226 / DSM 17306 / VKM B-2378 / K5).